Reading from the N-terminus, the 211-residue chain is Uridine kinase (211 aa).

13-20 (GGSGSGKT) provides a ligand contact to ATP.

It belongs to the uridine kinase family.

Its subcellular location is the cytoplasm. The enzyme catalyses uridine + ATP = UMP + ADP + H(+). It catalyses the reaction cytidine + ATP = CMP + ADP + H(+). It participates in pyrimidine metabolism; CTP biosynthesis via salvage pathway; CTP from cytidine: step 1/3. The protein operates within pyrimidine metabolism; UMP biosynthesis via salvage pathway; UMP from uridine: step 1/1. In Lactobacillus johnsonii (strain CNCM I-12250 / La1 / NCC 533), this protein is Uridine kinase.